A 129-amino-acid chain; its full sequence is SPbeta prophage-derived protein NrdI (129 aa).

This sequence belongs to the NrdI family.

Functionally, probably involved in ribonucleotide reductase function. This is SPbeta prophage-derived protein NrdI (nrdIB) from Bacillus subtilis (strain 168).